Reading from the N-terminus, the 149-residue chain is UPF0208 membrane protein VFMJ11_0876 (149 aa).

Helical transmembrane passes span 41–61 and 69–89; these read FAVKVMPAVAVISVLTQMVFN and AIIIALFAISMPLQGFWWLGN.

The protein belongs to the UPF0208 family.

Its subcellular location is the cell inner membrane. The sequence is that of UPF0208 membrane protein VFMJ11_0876 from Aliivibrio fischeri (strain MJ11) (Vibrio fischeri).